The following is a 187-amino-acid chain: Auxin-binding protein T85 (187 aa).

A signal peptide spans 1-20 (MARHVLVVVAVLLFATAEAS). A disulfide bond links cysteine 22 and cysteine 177. Histidine 78, histidine 80, and glutamate 84 together coordinate Zn(2+). An N-linked (GlcNAc...) asparagine glycan is attached at asparagine 117. Zn(2+) is bound at residue histidine 128. Residues 184 to 187 (KDEL) carry the Prevents secretion from ER motif.

In terms of assembly, homodimer.

It localises to the endoplasmic reticulum lumen. Its function is as follows. This is probably a receptor for the plant hormone auxin. This is Auxin-binding protein T85 (T85) from Nicotiana tabacum (Common tobacco).